The sequence spans 322 residues: (12E)-labda-8(17),12,14-triene synthase (322 aa).

The segment covering 1–11 has biased composition (polar residues); it reads MNDATRTSTTP. Positions 1–26 are disordered; the sequence is MNDATRTSTTPPALPMPDLRDSFPGP. The Mg(2+) site is built by D93 and E98. The DDXXXE motif motif lies at 93-98; sequence DDAHGE. Position 188 (R188) interacts with substrate. Residues N234 and S238 each coordinate Mg(2+). An NXXXSXXXE motif motif is present at residues 234-242; the sequence is NDLASYAKE. Position 241 (K241) interacts with substrate. E242 serves as a coordination point for Mg(2+). 319 to 320 contributes to the substrate binding site; it reads RY.

The protein belongs to the terpene synthase family. The cofactor is Mg(2+).

The catalysed reaction is (+)-copalyl diphosphate = (12E)-labda-8(17),12,14-triene + diphosphate. In terms of biological role, involved in the biosynthesis of the labdane-type bicyclic diterpene labda-8(17),12(E),14-triene. Catalyzes the conversion of (+)-copalyl diphosphate to yield labda-8(17),12(E),14-triene. The polypeptide is (12E)-labda-8(17),12,14-triene synthase (Streptomyces anulatus (Streptomyces chrysomallus)).